The following is a 253-amino-acid chain: Regulatory protein VirG (253 aa).

In terms of domain architecture, Response regulatory spans 15–129; sequence HVLVIDDDVA…EFLARIRVAL (115 aa). At Asp-64 the chain carries 4-aspartylphosphate. Positions 141-241 form a DNA-binding region, ompR/PhoB-type; that stretch reads RRSFSFADWT…ARGAGYFFDA (101 aa).

Post-translationally, phosphorylated by wide host range (WHR) VirA protein.

Its subcellular location is the cytoplasm. In terms of biological role, virG is required for the positive regulation of at least two vir loci encoded by the Ti plasmid of A.tumefaciens. The chain is Regulatory protein VirG (virG) from Agrobacterium fabrum (strain C58 / ATCC 33970) (Agrobacterium tumefaciens (strain C58)).